The sequence spans 103 residues: Large ribosomal subunit protein bL21 (103 aa).

It belongs to the bacterial ribosomal protein bL21 family. As to quaternary structure, part of the 50S ribosomal subunit. Contacts protein L20.

This protein binds to 23S rRNA in the presence of protein L20. The chain is Large ribosomal subunit protein bL21 from Shewanella sp. (strain MR-7).